The primary structure comprises 84 residues: Anaphase-promoting complex subunit 11 (84 aa).

The Zn(2+) site is built by Cys23, Cys26, Cys34, Cys37, Cys44, Cys51, His53, His56, His58, Cys59, Cys73, and Cys76. The RING-type zinc finger occupies 34 to 77; that stretch reads CPDCKVPGDDCPLVWGQCSHCFHMHCILKWLNAQQVQQHCPMCR.

It belongs to the RING-box family. In terms of assembly, the mammalian APC/C is composed at least of 14 distinct subunits ANAPC1, ANAPC2, CDC27/APC3, ANAPC4, ANAPC5, CDC16/APC6, ANAPC7, CDC23/APC8, ANAPC10, ANAPC11, CDC26/APC12, ANAPC13, ANAPC15 and ANAPC16 that assemble into a complex of at least 19 chains with a combined molecular mass of around 1.2 MDa; APC/C interacts with FZR1 and FBXO5. Interacts with the cullin domain of ANAPC2. Interacts with UBE2D2. In terms of processing, auto-ubiquitinated.

The protein resides in the cytoplasm. The protein localises to the nucleus. The protein operates within protein modification; protein ubiquitination. Functionally, together with the cullin protein ANAPC2, constitutes the catalytic component of the anaphase promoting complex/cyclosome (APC/C), a cell cycle-regulated E3 ubiquitin ligase that controls progression through mitosis and the G1 phase of the cell cycle. The APC/C complex acts by mediating ubiquitination and subsequent degradation of target proteins: it mainly mediates the formation of 'Lys-11'-linked polyubiquitin chains and, to a lower extent, the formation of 'Lys-48'- and 'Lys-63'-linked polyubiquitin chains. The APC/C complex catalyzes assembly of branched 'Lys-11'-/'Lys-48'-linked branched ubiquitin chains on target proteins. May recruit the E2 ubiquitin-conjugating enzymes to the complex. The sequence is that of Anaphase-promoting complex subunit 11 (ANAPC11) from Bos taurus (Bovine).